The primary structure comprises 243 residues: Chalcone--flavanone isomerase (243 aa).

Positions 50, 115, and 192 each coordinate substrate.

It belongs to the chalcone isomerase family.

The enzyme catalyses a chalcone = a flavanone.. The protein operates within secondary metabolite biosynthesis; flavonoid biosynthesis. Functionally, catalyzes the intramolecular cyclization of bicyclic chalcones into tricyclic (S)-flavanones. Responsible for the isomerization of 4,2',4',6'-tetrahydroxychalcone (also termed chalcone) into naringenin. The protein is Chalcone--flavanone isomerase (CHI) of Ipomoea batatas (Sweet potato).